The following is a 389-amino-acid chain: Putative F-box/kelch-repeat protein At4g35120 (389 aa).

The F-box domain occupies 24–70 (SMSISSLPDEIVLSFLALISKSYYRSLSLVSKSFYSLLSSTEIYAAR). 3 Kelch repeats span residues 128–174 (EIYK…FLDG), 176–225 (IYVI…AVSG), and 227–273 (RLYV…MKPI).

This is Putative F-box/kelch-repeat protein At4g35120 from Arabidopsis thaliana (Mouse-ear cress).